The following is a 218-amino-acid chain: Putative pre-16S rRNA nuclease (218 aa).

Belongs to the YqgF nuclease family.

It localises to the cytoplasm. Its function is as follows. Could be a nuclease involved in processing of the 5'-end of pre-16S rRNA. This chain is Putative pre-16S rRNA nuclease, found in Thermotoga maritima (strain ATCC 43589 / DSM 3109 / JCM 10099 / NBRC 100826 / MSB8).